The chain runs to 285 residues: Bifunctional protein FolD (285 aa).

NADP(+) contacts are provided by residues 165-167 (GRS) and serine 190.

It belongs to the tetrahydrofolate dehydrogenase/cyclohydrolase family. In terms of assembly, homodimer.

The enzyme catalyses (6R)-5,10-methylene-5,6,7,8-tetrahydrofolate + NADP(+) = (6R)-5,10-methenyltetrahydrofolate + NADPH. It carries out the reaction (6R)-5,10-methenyltetrahydrofolate + H2O = (6R)-10-formyltetrahydrofolate + H(+). It functions in the pathway one-carbon metabolism; tetrahydrofolate interconversion. Its function is as follows. Catalyzes the oxidation of 5,10-methylenetetrahydrofolate to 5,10-methenyltetrahydrofolate and then the hydrolysis of 5,10-methenyltetrahydrofolate to 10-formyltetrahydrofolate. The polypeptide is Bifunctional protein FolD (Burkholderia thailandensis (strain ATCC 700388 / DSM 13276 / CCUG 48851 / CIP 106301 / E264)).